The primary structure comprises 635 residues: Threonine--tRNA ligase (635 aa).

Positions M1–A152 are editing domain. Residues P215–P514 are catalytic. Residues C307, H359, and H483 each contribute to the Zn(2+) site.

This sequence belongs to the class-II aminoacyl-tRNA synthetase family. In terms of assembly, homodimer. Zn(2+) is required as a cofactor.

It localises to the cytoplasm. It carries out the reaction tRNA(Thr) + L-threonine + ATP = L-threonyl-tRNA(Thr) + AMP + diphosphate + H(+). Functionally, catalyzes the attachment of threonine to tRNA(Thr) in a two-step reaction: L-threonine is first activated by ATP to form Thr-AMP and then transferred to the acceptor end of tRNA(Thr). Also edits incorrectly charged L-seryl-tRNA(Thr). This Methanosarcina acetivorans (strain ATCC 35395 / DSM 2834 / JCM 12185 / C2A) protein is Threonine--tRNA ligase.